A 310-amino-acid polypeptide reads, in one-letter code: Fe-S cluster assembly protein dre2 (310 aa).

Disordered regions lie at residues 1–30 (MAPS…GKRT) and 165–184 (APAP…DDND). Positions 24 to 154 (ADSGKRTLLL…KMDVGNGAAV (131 aa)) are N-terminal SAM-like domain. The linker stretch occupies residues 155–202 (PLRLGRKKKAAPAPAPVVQPPPIISSDDNDLNDDELIDEDTLLSADDL). The span at 167–177 (APAPVVQPPPI) shows a compositional bias: pro residues. [2Fe-2S] cluster is bound by residues C212, C223, C226, and C228. Positions 212–228 (CQPKAGKRRRACKDCTC) are fe-S binding site A. 4 residues coordinate [4Fe-4S] cluster: C273, C276, C284, and C287. 2 consecutive short sequence motifs (cx2C motif) follow at residues 273–276 (CGNC) and 284–287 (CDGC). Positions 273–287 (CGNCALGDAFRCDGC) are fe-S binding site B.

The protein belongs to the anamorsin family. In terms of assembly, monomer. Interacts with tah18. Interacts with mia40. It depends on [2Fe-2S] cluster as a cofactor. Requires [4Fe-4S] cluster as cofactor.

The protein resides in the cytoplasm. The protein localises to the mitochondrion intermembrane space. Component of the cytosolic iron-sulfur (Fe-S) protein assembly (CIA) machinery required for the maturation of extramitochondrial Fe-S proteins. Part of an electron transfer chain functioning in an early step of cytosolic Fe-S biogenesis, facilitating the de novo assembly of a [4Fe-4S] cluster on the scaffold complex cfd1-nbp35. Electrons are transferred to dre2 from NADPH via the FAD- and FMN-containing protein tah18. Tah18-dre2 are also required for the assembly of the diferric tyrosyl radical cofactor of ribonucleotide reductase (RNR), probably by providing electrons for reduction during radical cofactor maturation in the catalytic small subunit rnr2. The chain is Fe-S cluster assembly protein dre2 from Emericella nidulans (strain FGSC A4 / ATCC 38163 / CBS 112.46 / NRRL 194 / M139) (Aspergillus nidulans).